The chain runs to 1408 residues: DNA-directed RNA polymerase subunit beta' (1408 aa).

Zn(2+) contacts are provided by Cys70, Cys72, Cys85, and Cys88. Asp460, Asp462, and Asp464 together coordinate Mg(2+). Residues Cys814, Cys888, Cys895, and Cys898 each contribute to the Zn(2+) site.

This sequence belongs to the RNA polymerase beta' chain family. As to quaternary structure, the RNAP catalytic core consists of 2 alpha, 1 beta, 1 beta' and 1 omega subunit. When a sigma factor is associated with the core the holoenzyme is formed, which can initiate transcription. Mg(2+) serves as cofactor. Zn(2+) is required as a cofactor.

It carries out the reaction RNA(n) + a ribonucleoside 5'-triphosphate = RNA(n+1) + diphosphate. Its function is as follows. DNA-dependent RNA polymerase catalyzes the transcription of DNA into RNA using the four ribonucleoside triphosphates as substrates. In Baumannia cicadellinicola subsp. Homalodisca coagulata, this protein is DNA-directed RNA polymerase subunit beta'.